A 443-amino-acid polypeptide reads, in one-letter code: Exodeoxyribonuclease 7 large subunit (443 aa).

The protein belongs to the XseA family. In terms of assembly, heterooligomer composed of large and small subunits.

It localises to the cytoplasm. It carries out the reaction Exonucleolytic cleavage in either 5'- to 3'- or 3'- to 5'-direction to yield nucleoside 5'-phosphates.. Its function is as follows. Bidirectionally degrades single-stranded DNA into large acid-insoluble oligonucleotides, which are then degraded further into small acid-soluble oligonucleotides. This Vibrio parahaemolyticus serotype O3:K6 (strain RIMD 2210633) protein is Exodeoxyribonuclease 7 large subunit.